Here is a 162-residue protein sequence, read N- to C-terminus: NADH-quinone oxidoreductase subunit I (162 aa).

2 consecutive 4Fe-4S ferredoxin-type domains span residues 54-83 (RRYE…INST) and 93-122 (SSYE…ETNI). The [4Fe-4S] cluster site is built by C63, C66, C69, C73, C102, C105, C108, and C112.

The protein belongs to the complex I 23 kDa subunit family. NDH-1 is composed of 14 different subunits. Subunits NuoA, H, J, K, L, M, N constitute the membrane sector of the complex. Requires [4Fe-4S] cluster as cofactor.

The protein resides in the cell inner membrane. It catalyses the reaction a quinone + NADH + 5 H(+)(in) = a quinol + NAD(+) + 4 H(+)(out). In terms of biological role, NDH-1 shuttles electrons from NADH, via FMN and iron-sulfur (Fe-S) centers, to quinones in the respiratory chain. The immediate electron acceptor for the enzyme in this species is believed to be ubiquinone. Couples the redox reaction to proton translocation (for every two electrons transferred, four hydrogen ions are translocated across the cytoplasmic membrane), and thus conserves the redox energy in a proton gradient. The protein is NADH-quinone oxidoreductase subunit I of Francisella philomiragia subsp. philomiragia (strain ATCC 25017 / CCUG 19701 / FSC 153 / O#319-036).